The primary structure comprises 81 residues: uncharacterized protein (81 aa).

In terms of tissue distribution, expressed in fetal brain.

This is an uncharacterized protein from Homo sapiens (Human).